The following is a 693-amino-acid chain: MKIFREVFELGNKEIILETGGMARQADGSVTVSCGNNVVLVTTVVKKSVADGTDFFPLSVHYLEKTYAAGKIPGGFLRREGRPSEEQILISRLIDRSIRPSFPDGFFNEIQIVATVLSYDGAVAPDILALIGASASLAISGAPYDDVVAGVRVGYTNGKYILNPNKQDLRDSDLDLVVSGTDDAILMVESEANSLPESVMLGGILYAHKHLKTIINSINRLAKVASKPRIEYSIYQINKFLKSQIKSQFFGEIKNAYTIASKQERNLKLNAIRKNVLEYIFSSDVDGNEYTEKEILEAFHDIEKDLVRSNILEGKPRIDGRCTETIRPINVKIGVLPGVHGSALFTRGETQALVVTTLGSDRDAQLVESLDGIEKCRYMLHYNFPPYSVGECGMVGMAPKRREIGHANLAKRATQAVFPNEEAYPYVVRVVSEILESNGSSSMATVCGSSLSMMDAGVPIAEPVAGIAMGLIKDGAKYAVLSDILGDEDHLGDMDFKVAGTRYGVTALQMDIKIKGISREILEQALEQARVGRLHILGIMNEVIKEHKEAVSDVAPQIHVMNINPAKIKDVVGRGGATVKGIVEKTGAQIDTSDSGEVKVFAKDKKSMDMAVAMIEEIVAEVEEGQVYKGKIVKLLDSGVFVNLLGSQDGYLPFSEIEQAGMKTNSLVEGQGLEVLVQNIDRGGRVKLSLVAR.

Aspartate 489 and aspartate 495 together coordinate Mg(2+). The 60-residue stretch at 556–615 folds into the KH domain; sequence PQIHVMNINPAKIKDVVGRGGATVKGIVEKTGAQIDTSDSGEVKVFAKDKKSMDMAVAMI. The region spanning 625–693 is the S1 motif domain; that stretch reads GQVYKGKIVK…GRVKLSLVAR (69 aa).

This sequence belongs to the polyribonucleotide nucleotidyltransferase family. In terms of assembly, component of the RNA degradosome, which is a multiprotein complex involved in RNA processing and mRNA degradation. Requires Mg(2+) as cofactor.

The protein localises to the cytoplasm. The catalysed reaction is RNA(n+1) + phosphate = RNA(n) + a ribonucleoside 5'-diphosphate. In terms of biological role, involved in mRNA degradation. Catalyzes the phosphorolysis of single-stranded polyribonucleotides processively in the 3'- to 5'-direction. The chain is Polyribonucleotide nucleotidyltransferase from Francisella tularensis subsp. tularensis (strain WY96-3418).